The following is a 669-amino-acid chain: Soluble guanylate cyclase 89Db (669 aa).

Position 104 (His-104) interacts with heme. Residues 430-458 (QHCSKLEIMFEKEEQRSDELEKSLELADS) adopt a coiled-coil conformation. Residues 494-620 (SVIFIEVMNI…DTVNTASRME (127 aa)) enclose the Guanylate cyclase domain.

Belongs to the adenylyl cyclase class-4/guanylyl cyclase family. As to quaternary structure, heterodimer; with Gyc88E, in the presence of magnesium or manganese. It depends on heme as a cofactor. As to expression, expressed in embryos in a segmental pattern in the ventral nerve cord (VNC) and in the brain, beginning at stage 13 and continuing through to stage 17. Colocalized with Gyc-89Db in several peripheral neurons that innervate trachea, basiconical sensilla and the sensory cones in the posterior segments of the embryo. Expression in wandering 3rd instar larvae is most prominent in a small cluster of cells located in the anterior medial region of each brain lobe. In the VNC, expression is found in scattered cells both laterally and at the midline.

It is found in the cytoplasm. It catalyses the reaction GTP = 3',5'-cyclic GMP + diphosphate. Probably not activated by nitric oxide (NO). Heterodimer exhibits some stimulation, compounds (SIN-1 and two of the NONOates) that were ineffective at stimulating Gyc-88E homodimer did stimulate the heterodimer. Its function is as follows. Heterodimers with Gyc88E are activated in response to changing oxygen concentrations, alerting flies to hypoxic environments. Under normal oxygen concentrations, oxygen binds to the heme group and results in low levels of guanylyl cyclase activity. When exposed to reduced oxygen concentrations, the oxygen dissociates from the heme group resulting in activation of the enzyme. This is Soluble guanylate cyclase 89Db from Drosophila melanogaster (Fruit fly).